A 431-amino-acid chain; its full sequence is Tryptophan synthase beta chain (431 aa).

Lys109 carries the post-translational modification N6-(pyridoxal phosphate)lysine.

The protein belongs to the TrpB family. In terms of assembly, tetramer of two alpha and two beta chains. The cofactor is pyridoxal 5'-phosphate.

It carries out the reaction (1S,2R)-1-C-(indol-3-yl)glycerol 3-phosphate + L-serine = D-glyceraldehyde 3-phosphate + L-tryptophan + H2O. It participates in amino-acid biosynthesis; L-tryptophan biosynthesis; L-tryptophan from chorismate: step 5/5. The beta subunit is responsible for the synthesis of L-tryptophan from indole and L-serine. The polypeptide is Tryptophan synthase beta chain (Deinococcus radiodurans (strain ATCC 13939 / DSM 20539 / JCM 16871 / CCUG 27074 / LMG 4051 / NBRC 15346 / NCIMB 9279 / VKM B-1422 / R1)).